The primary structure comprises 137 residues: Large ribosomal subunit protein uL16 (137 aa).

It belongs to the universal ribosomal protein uL16 family. In terms of assembly, part of the 50S ribosomal subunit.

In terms of biological role, binds 23S rRNA and is also seen to make contacts with the A and possibly P site tRNAs. In Stenotrophomonas maltophilia (strain K279a), this protein is Large ribosomal subunit protein uL16.